The following is a 178-amino-acid chain: Large ribosomal subunit protein uL6 (178 aa).

The protein belongs to the universal ribosomal protein uL6 family. Part of the 50S ribosomal subunit.

This protein binds to the 23S rRNA, and is important in its secondary structure. It is located near the subunit interface in the base of the L7/L12 stalk, and near the tRNA binding site of the peptidyltransferase center. The protein is Large ribosomal subunit protein uL6 of Nitrosococcus oceani (strain ATCC 19707 / BCRC 17464 / JCM 30415 / NCIMB 11848 / C-107).